Here is a 168-residue protein sequence, read N- to C-terminus: Putative defense protein 1 (168 aa).

An N-terminal signal peptide occupies residues 1 to 18 (MMFAYIVAVVSALALTSA). Positions 19-168 (FPTGAPRSAC…SAPVKILSHH (150 aa)) constitute a Reelin domain. Cys28 and Cys105 form a disulfide bridge.

Belongs to the insect defense protein family. In terms of tissue distribution, very highly expressed in midgut, and highly expressed in fat body, silk gland and epidermis.

Its subcellular location is the secreted. As this protein is expressed upon bacterial infection, it may have antimicrobial activity. This chain is Putative defense protein 1, found in Antheraea mylitta (Tasar silkworm).